Here is a 156-residue protein sequence, read N- to C-terminus: Small ribosomal subunit protein uS7 (156 aa).

Belongs to the universal ribosomal protein uS7 family. Part of the 30S ribosomal subunit. Contacts proteins S9 and S11.

In terms of biological role, one of the primary rRNA binding proteins, it binds directly to 16S rRNA where it nucleates assembly of the head domain of the 30S subunit. Is located at the subunit interface close to the decoding center, probably blocks exit of the E-site tRNA. This chain is Small ribosomal subunit protein uS7, found in Glaesserella parasuis serovar 5 (strain SH0165) (Haemophilus parasuis).